Consider the following 302-residue polypeptide: Dehydrodolichyl diphosphate synthase 3 (302 aa).

It belongs to the UPP synthase family. Requires Mg(2+) as cofactor.

Its pathway is protein modification; protein glycosylation. Catalyzes cis-prenyl chain elongation to produce the polyprenyl backbone of dolichol, a glycosyl carrier-lipid required for the biosynthesis of several classes of glycoprotein. This Arabidopsis thaliana (Mouse-ear cress) protein is Dehydrodolichyl diphosphate synthase 3.